Here is a 556-residue protein sequence, read N- to C-terminus: Riboflavin biosynthesis protein RibBA (556 aa).

Residues 1–202 (MFDAIDAALA…IADLISYRLQ (202 aa)) are DHBP synthase. D-ribulose 5-phosphate is bound by residues 26–27 (RE), D31, 141–145 (RAGHT), and E165. Residue E27 coordinates Mg(2+). H144 is a Mg(2+) binding site. The interval 203-402 (HDRFVQRETI…AEKLGHWLVK (200 aa)) is GTP cyclohydrolase II. GTP is bound at residue 255–259 (RMHSE). C260, C271, and C273 together coordinate Zn(2+). Residues Q276, 298–300 (EGR), and T320 each bind GTP. D332 serves as the catalytic Proton acceptor; for GTP cyclohydrolase activity. The Nucleophile; for GTP cyclohydrolase activity role is filled by R334. Positions 355 and 360 each coordinate GTP. The segment at 403–556 (NYLLAIAIKF…KQGSGEMTNR (154 aa)) is unknown.

The protein in the N-terminal section; belongs to the DHBP synthase family. This sequence in the central section; belongs to the GTP cyclohydrolase II family. The cofactor is Mg(2+). Requires Mn(2+) as cofactor. Zn(2+) is required as a cofactor.

It catalyses the reaction D-ribulose 5-phosphate = (2S)-2-hydroxy-3-oxobutyl phosphate + formate + H(+). The catalysed reaction is GTP + 4 H2O = 2,5-diamino-6-hydroxy-4-(5-phosphoribosylamino)-pyrimidine + formate + 2 phosphate + 3 H(+). The protein operates within cofactor biosynthesis; riboflavin biosynthesis; 2-hydroxy-3-oxobutyl phosphate from D-ribulose 5-phosphate: step 1/1. It participates in cofactor biosynthesis; riboflavin biosynthesis; 5-amino-6-(D-ribitylamino)uracil from GTP: step 1/4. In terms of biological role, catalyzes the conversion of D-ribulose 5-phosphate to formate and 3,4-dihydroxy-2-butanone 4-phosphate. Its function is as follows. Catalyzes the conversion of GTP to 2,5-diamino-6-ribosylamino-4(3H)-pyrimidinone 5'-phosphate (DARP), formate and pyrophosphate. This is Riboflavin biosynthesis protein RibBA (ribBA) from Synechocystis sp. (strain ATCC 27184 / PCC 6803 / Kazusa).